The following is a 336-amino-acid chain: Potassium channel subfamily K member 1 (336 aa).

Residues 1 to 20 (MLQSLAGSSCVRLVERHRSA) lie on the Cytoplasmic side of the membrane. The chain crosses the membrane as a helical span at residues 21–41 (WCFGFLVLGYLLYLVFGAVVF). Residues 42-103 (SSVELPYEDL…SNASGNWNWD (62 aa)) are Extracellular-facing. Residue Asn95 is glycosylated (N-linked (GlcNAc...) asparagine). The helical intramembrane region spans 104-116 (FTSALFFASTVLS). An intramembrane segment occupies 117-122 (TTGYGH). The selectivity filter 1 stretch occupies residues 117 to 122 (TTGYGH). At 123 to 132 (TVPLSDGGKA) the chain is on the extracellular side. Residues 133–156 (FCIIYSVIGIPFTLLFLTAVVQRV) traverse the membrane as a helical segment. Over 157–181 (TIHVTRRPVLYFHVRWGFSKQAVAI) the chain is Cytoplasmic. Residues 182-202 (VHAVLLGVVTVSCFFFIPAAV) form a helical membrane-spanning segment. Residues 203–211 (FSVLEDDWN) are Extracellular-facing. The segment at residues 212–224 (FLESFYFCFISLS) is an intramembrane region (helical). Positions 225–230 (TIGLGD) are selectivity filter 2. An intramembrane segment occupies 225 to 231 (TIGLGDY). The Extracellular portion of the chain corresponds to 232 to 243 (VPGEGYNQKFRE). A helical transmembrane segment spans residues 244-267 (LYKIGITCYLLLGLIAMLVVLETF). Topologically, residues 268-336 (CELHELKKFR…PALADGASDH (69 aa)) are cytoplasmic. Lys274 participates in a covalent cross-link: Glycyl lysine isopeptide (Lys-Gly) (interchain with G-Cter in SUMO). Residues 293–299 (IIEHDQL) form an important for intracellular retention in recycling endosomes region. The tract at residues 307 to 336 (QAAGVQEDQKQNEPFVSPQPPALADGASDH) is disordered.

It belongs to the two pore domain potassium channel (TC 1.A.1.8) family. As to quaternary structure, homodimer; disulfide-linked. Heterodimer with KCNK2; disulfide-linked. In astrocytes, forms mostly heterodimeric potassium channels with KCNK2, with only a minor proportion of functional channels containing homodimeric KCNK1. Interacts with KCNK3 and KCNK9, forming functional heterodimeric channels. Interacts with GNG4. Identified in a complex with PSD and ARF6; interacts only with PSD that is bound to ARF6. Interacts with UBE2I. In terms of processing, sumoylation is controversial. Sumoylated by UBE2I. Not sumoylated when expressed in xenopus oocytes or mammalian cells. Sumoylation inactivates the channel, but does not interfere with expression at the cell membrane. Sumoylation of a single subunit is sufficient to silence the dimeric channel. Sumoylation of KCNK1 is sufficient to silence heterodimeric channels formed by KCNK1 and KCNK3 or KCNK9. Desumoylated by SENP1; this activates the channel. Desumoylated by SENP1; this strongly increases halothane-mediated activation of heterodimeric channels formed with KCNK9. SENP1 treatment has no effect.

The protein localises to the cell membrane. The protein resides in the recycling endosome. Its subcellular location is the synaptic cell membrane. It is found in the cytoplasmic vesicle. It localises to the perikaryon. The protein localises to the cell projection. The protein resides in the dendrite. Its subcellular location is the apical cell membrane. It carries out the reaction K(+)(in) = K(+)(out). It catalyses the reaction NH4(+)(in) = NH4(+)(out). The enzyme catalyses Na(+)(in) = Na(+)(out). The catalysed reaction is Rb(+)(in) = Rb(+)(out). It carries out the reaction Cs(+)(in) = Cs(+)(out). It catalyses the reaction Li(+)(in) = Li(+)(out). The enzyme catalyses L-glutamate(out) = L-glutamate(in). The catalysed reaction is chloride(in) = chloride(out). Ion channel that contributes to passive transmembrane potassium transport and to the regulation of the resting membrane potential in brain astrocytes, but also in kidney and in other tissues. Forms dimeric channels through which potassium ions pass in accordance with their electrochemical gradient. The channel is selective for K(+) ions at physiological potassium concentrations and at neutral pH, but becomes permeable to Na(+) at subphysiological K(+) levels and upon acidification of the extracellular medium. The homodimer has very low potassium channel activity, when expressed in heterologous systems, and can function as weakly inward rectifying potassium channel. Channel activity is modulated by activation of serotonin receptors. Heterodimeric channels containing KCNK1 and KCNK2 have much higher activity, and may represent the predominant form in astrocytes. Heterodimeric channels containing KCNK1 and KCNK3 or KCNK9 have much higher activity. Heterodimeric channels formed by KCNK1 and KCNK9 may contribute to halothane-sensitive currents. Mediates outward rectifying potassium currents in dentate gyrus granule cells and contributes to the regulation of their resting membrane potential. Contributes to the regulation of action potential firing in dentate gyrus granule cells and down-regulates their intrinsic excitability. In astrocytes, the heterodimer formed by KCNK1 and KCNK2 is required for rapid glutamate release in response to activation of G-protein coupled receptors, such as F2R and CNR1. Required for normal ion and water transport in the kidney. Contributes to the regulation of the resting membrane potential of pancreatic beta cells. The low channel activity of homodimeric KCNK1 may be due to sumoylation. The low channel activity may be due to rapid internalization from the cell membrane and retention in recycling endosomes. Permeable to monovalent cations with ion selectivity for K(+) &gt; Rb(+) &gt;&gt; NH4(+) &gt;&gt; Cs(+) = Na(+) = Li(+). In Bos taurus (Bovine), this protein is Potassium channel subfamily K member 1.